A 441-amino-acid chain; its full sequence is Amino-acid acetyltransferase (441 aa).

In terms of domain architecture, N-acetyltransferase spans 295–434 (EQVRRATIND…QALYNYQRRS (140 aa)).

The protein belongs to the acetyltransferase family. ArgA subfamily. Homohexamer.

It is found in the cytoplasm. The catalysed reaction is L-glutamate + acetyl-CoA = N-acetyl-L-glutamate + CoA + H(+). It participates in amino-acid biosynthesis; L-arginine biosynthesis; N(2)-acetyl-L-ornithine from L-glutamate: step 1/4. The polypeptide is Amino-acid acetyltransferase (Pectobacterium carotovorum subsp. carotovorum (strain PC1)).